Reading from the N-terminus, the 344-residue chain is tRNA N6-adenosine threonylcarbamoyltransferase (344 aa).

Positions 113 and 117 each coordinate Fe cation. Substrate is bound by residues 135–139 (LVSGG), Asp-169, Gly-182, Asp-186, and Asn-278. Asp-306 is a binding site for Fe cation. The segment at 325 to 344 (ESPISVGTDPSLSVETPQVF) is disordered. Polar residues predominate over residues 326 to 344 (SPISVGTDPSLSVETPQVF).

This sequence belongs to the KAE1 / TsaD family. Fe(2+) is required as a cofactor.

The protein localises to the cytoplasm. The enzyme catalyses L-threonylcarbamoyladenylate + adenosine(37) in tRNA = N(6)-L-threonylcarbamoyladenosine(37) in tRNA + AMP + H(+). In terms of biological role, required for the formation of a threonylcarbamoyl group on adenosine at position 37 (t(6)A37) in tRNAs that read codons beginning with adenine. Is involved in the transfer of the threonylcarbamoyl moiety of threonylcarbamoyl-AMP (TC-AMP) to the N6 group of A37, together with TsaE and TsaB. TsaD likely plays a direct catalytic role in this reaction. The protein is tRNA N6-adenosine threonylcarbamoyltransferase of Corynebacterium glutamicum (strain ATCC 13032 / DSM 20300 / JCM 1318 / BCRC 11384 / CCUG 27702 / LMG 3730 / NBRC 12168 / NCIMB 10025 / NRRL B-2784 / 534).